We begin with the raw amino-acid sequence, 347 residues long: Dual specificity mitogen-activated protein kinase kinase 3 (347 aa).

At M1 the chain carries N-acetylmethionine. Over residues M1–S15 the composition is skewed to low complexity. The segment at M1–S46 is disordered. S3 and S15 each carry phosphoserine. One can recognise a Protein kinase domain in the interval L64–F325. Residues L70–V78 and K93 contribute to the ATP site. D190 acts as the Proton acceptor in catalysis. S218 bears the Phosphoserine mark. A Phosphothreonine modification is found at T222.

It belongs to the protein kinase superfamily. STE Ser/Thr protein kinase family. MAP kinase kinase subfamily. Component of a signaling complex containing at least AKAP13, PKN1, MAPK14, ZAK and MAP2K3. Within this complex, AKAP13 interacts directly with PKN1, which in turn recruits MAPK14, MAP2K3 and ZAK. Binds to DYRK1B/MIRK and increases its kinase activity. Part of a complex with MAP3K3, RAC1 and CCM2. Interacts with ARRB1. In terms of assembly, (Microbial infection) Interacts with Yersinia YopJ. Post-translationally, autophosphorylated. Phosphorylation on Ser-218 and Thr-222 by MAP kinase kinase kinases positively regulates the kinase activity. Phosphorylated by TAOK2. (Microbial infection) Yersinia YopJ may acetylate Ser/Thr residues, preventing phosphorylation and activation, thus blocking the MAPK signaling pathway. As to expression, abundant expression is seen in the skeletal muscle. It is also widely expressed in other tissues.

It catalyses the reaction L-seryl-[protein] + ATP = O-phospho-L-seryl-[protein] + ADP + H(+). The enzyme catalyses L-threonyl-[protein] + ATP = O-phospho-L-threonyl-[protein] + ADP + H(+). It carries out the reaction L-tyrosyl-[protein] + ATP = O-phospho-L-tyrosyl-[protein] + ADP + H(+). With respect to regulation, activated by dual phosphorylation on Ser-218 and Thr-222. Functionally, dual specificity kinase. Is activated by cytokines and environmental stress in vivo. Catalyzes the concomitant phosphorylation of a threonine and a tyrosine residue in the MAP kinase p38. Part of a signaling cascade that begins with the activation of the adrenergic receptor ADRA1B and leads to the activation of MAPK14. In Homo sapiens (Human), this protein is Dual specificity mitogen-activated protein kinase kinase 3 (MAP2K3).